Consider the following 355-residue polypeptide: Peptide chain release factor 1 (355 aa).

An N5-methylglutamine modification is found at glutamine 233.

The protein belongs to the prokaryotic/mitochondrial release factor family. Methylated by PrmC. Methylation increases the termination efficiency of RF1.

The protein localises to the cytoplasm. Functionally, peptide chain release factor 1 directs the termination of translation in response to the peptide chain termination codons UAG and UAA. In Caldicellulosiruptor saccharolyticus (strain ATCC 43494 / DSM 8903 / Tp8T 6331), this protein is Peptide chain release factor 1.